Reading from the N-terminus, the 446-residue chain is MNILSRIFARTPSLRTRVVVATAIGAAIPVLIVGTVVWVGITNDRKERLDRRLDEAAGFAIPFVPRGLDEIPRSPNDQDALITVRRGNVIKSNSDITLPKLQDDYADTYVRGVRYRVRTVEIPGPEPTSVAVGATYDATVAETNNLHRRVLLICTFAIGAAAVFAWLLAAFAVRPFKQLAEQTRSIDAGDEAPRVEVHGASEAIEIAEAMRGMLQRIWNEQNRTKEALASARDFAAVSSHELRTPLTAMRTNLEVLSTLDLPDDQRKEVLNDVIRTQSRIEATLSALERLAQGELSTSDDHVPVDITDLLDRAAHDAARIYPDLDVSLVPSPTCIIVGLPAGLRLAVDNAIANAVKHGGATLVQLSAVSSRAGVEIAIDDNGSGVPEGERQVVFERFSRGSTASHSGSGLGLALVAQQAQLHGGTASLENSPLGGARLVLRLPGPS.

Transmembrane regions (helical) follow at residues 19 to 39 (VVAT…VVWV) and 151 to 171 (LLIC…LAAF). Residues 172-222 (AVRPFKQLAEQTRSIDAGDEAPRVEVHGASEAIEIAEAMRGMLQRIWNEQN) enclose the HAMP domain. The Histidine kinase domain occupies 237-446 (VSSHELRTPL…RLVLRLPGPS (210 aa)). At His-240 the chain carries Phosphohistidine; by autocatalysis.

Post-translationally, autophosphorylated.

Its subcellular location is the cell membrane. It carries out the reaction ATP + protein L-histidine = ADP + protein N-phospho-L-histidine.. Member of the two-component regulatory system PrrB/PrrA that is involved specifically in early intracellular multiplication of Mycobacterium and is essential for its viability. Functions as a sensor protein kinase which is autophosphorylated at a histidine residue and transfers its phosphate group to the conserved aspartic acid residue in the regulatory domain of PrrA. In turn, PrrA binds to the upstream promoter regions of target genes including itself to positively regulate their expression. The sequence is that of Sensor-type histidine kinase PrrB (prrB) from Mycobacterium bovis (strain ATCC BAA-935 / AF2122/97).